The following is a 334-amino-acid chain: Methionyl-tRNA formyltransferase (334 aa).

111-114 (SLLP) serves as a coordination point for (6S)-5,6,7,8-tetrahydrofolate.

Belongs to the Fmt family.

It carries out the reaction L-methionyl-tRNA(fMet) + (6R)-10-formyltetrahydrofolate = N-formyl-L-methionyl-tRNA(fMet) + (6S)-5,6,7,8-tetrahydrofolate + H(+). Attaches a formyl group to the free amino group of methionyl-tRNA(fMet). The formyl group appears to play a dual role in the initiator identity of N-formylmethionyl-tRNA by promoting its recognition by IF2 and preventing the misappropriation of this tRNA by the elongation apparatus. The chain is Methionyl-tRNA formyltransferase from Cyanothece sp. (strain PCC 7425 / ATCC 29141).